The following is a 327-amino-acid chain: 2-methoxy-6-polyprenyl-1,4-benzoquinol methylase, mitochondrial (327 aa).

The transit peptide at Met1–Ala49 directs the protein to the mitochondrion. S-adenosyl-L-methionine-binding positions include Thr117, Asp171, and Asp199–Ala200.

Belongs to the class I-like SAM-binding methyltransferase superfamily. MenG/UbiE family. Component of a multi-subunit COQ enzyme complex, composed of at least COQ3, COQ4, COQ5, COQ6, COQ7 and COQ9. Interacts with PYURF; the interaction is direct, stabilizes COQ5 protein and associates PYURF with COQ enzyme complex.

It is found in the mitochondrion inner membrane. It catalyses the reaction 2-methoxy-6-(all-trans-decaprenyl)benzene-1,4-diol + S-adenosyl-L-methionine = 5-methoxy-2-methyl-3-(all-trans-decaprenyl)benzene-1,4-diol + S-adenosyl-L-homocysteine + H(+). It participates in cofactor biosynthesis; ubiquinone biosynthesis. Methyltransferase required for the conversion of 2-decaprenyl-6-methoxy-1,4-benzoquinol (DDMQH2) to 2-decaprenyl-3-methyl-6-methoxy-1,4-benzoquinol (DMQH2). The polypeptide is 2-methoxy-6-polyprenyl-1,4-benzoquinol methylase, mitochondrial (Mus musculus (Mouse)).